Consider the following 1189-residue polypeptide: Disabled homolog 2-interacting protein (1189 aa).

A disordered region spans residues 1-75 (MSAGGNARKS…EPSASTPFRV (75 aa)). The span at 20–38 (LLRRPRLQRQRSRSRSRTR) shows a compositional bias: basic residues. Positions 39 to 49 (PARESPQERPG) are enriched in basic and acidic residues. A compositionally biased stretch (polar residues) spans 59-73 (SEKNPSMEPSASTPF). Residues 101 to 202 (SFRHILPGFR…WMENLRRAVH (102 aa)) enclose the PH domain. The 119-residue stretch at 193 to 311 (WMENLRRAVH…AGRQFVEKWY (119 aa)) folds into the C2 domain. In terms of domain architecture, Ras-GAP spans 387-595 (GKVKDFLTDL…TNMQRFLLEI (209 aa)). The interval 646-943 (LRDVHTALST…RTPPTLLSTL (298 aa)) is necessary for interaction with AKT1. The segment covering 653 to 668 (LSTPGSGQLPGTNDLA) has biased composition (polar residues). 2 disordered regions span residues 653-679 (LSTP…SSVS) and 715-738 (RSSG…PDLQ). Low complexity predominate over residues 669-679 (STPGSGSSSVS). Residues 715–731 (RSSGVQPSPARSSSYSE) show a composition bias toward polar residues. Serine 728 carries the post-translational modification Phosphoserine; by MAP3K5 and RIPK1. Serine 747 is modified (phosphoserine). Disordered stretches follow at residues 804 to 823 (VPTP…PQLL), 843 to 865 (PRGL…NSEE), 895 to 998 (SLTE…SPNA), 1015 to 1034 (EDEG…SKEE), and 1163 to 1189 (ARNG…SSNC). Positions 852 to 865 (EGHSSLSSHSNSEE) are enriched in low complexity. The span at 919-931 (QPPPPPPPPPPAP) shows a compositional bias: pro residues. 2 stretches are compositionally biased toward polar residues: residues 939 to 955 (LLST…TLAS) and 967 to 976 (LRQQSSSSKG). Phosphoserine is present on residues serine 978 and serine 995. Basic and acidic residues predominate over residues 1023–1034 (PPHRDRLRSKEE). The stretch at 1025–1159 (HRDRLRSKEE…SALTQLKERY (135 aa)) forms a coiled coil.

In terms of assembly, on plasma membrane, exists in an inactive form complexed with TNFR1; in response to TNF-alpha, dissociates from TNFR1 complex, translocates to cytoplasm and forms part of an intracellular signaling complex comprising TRADD, RIPK1, TRAF2 and MAP3K5. Interacts with DAB1. Part of a cytoplasmic complex made of HIPK1, DAB2IP and MAP3K5 in response to TNF-alpha; this complex formation promotes MAP3K5-JNK activation and subsequent apoptosis. Interacts (via N-terminal domain) with JAK2; the interaction occurs in a IFNG/IFN-gamma-dependent manner and inhibits JAK2 autophosphorylation activity. Interacts (via C2 domain) with GSK3B; the interaction stimulates GSK3B kinase activation. Interacts (via C2 domain) with PPP2CA. Interacts (via proline-rich motif) with a regulatory p85 subunit (via SH3 domain) of the PI3K complex; the interaction inhibits the PI3K-AKT complex activity in a TNF-alpha-dependent manner in prostate cancer (PCa) cells. Interacts with AKT1; the interaction is increased in a TNF-alpha-induced manner. Interacts (via C2 domain and active form preferentially) with KDR/VEGFR2 (tyrosine-phosphorylated active form preferentially); the interaction occurs at the late phase of VEGFA response and inhibits KDR/VEGFR2 activity. Interacts (via N-terminus C2 domain) with MAP3K5 ('Ser-966' dephosphorylated form preferentially); the interaction occurs in a TNF-alpha-induced manner. Interacts (via Ras-GAP domain) with the catalytic subunit of protein phosphatase PP2A; the interaction occurs in resting endothelial cells, is further enhanced by TNF-alpha stimulation and is required to bridge PP2A to MAP3K5. Interacts (via C-terminus PER domain) with TRAF2 (via zinc fingers); the interaction occurs in a TNF-alpha-dependent manner. Interacts with 14-3-3 proteins; the interaction occurs in a TNF-alpha-dependent manner. Interacts (via Ras-GAP domain) with RIPK1 (via kinase domain); the interaction occurs in a TNF-alpha-dependent manner. Interacts (via PH domain) with ERN1. Interacts with TRAF2. Interacts (via NPXY motif) with DAB2 (via PID domain). Interacts with RAB40C; acts as a GAP for RAB40C. In response to TNF-alpha-induction, phosphorylated at Ser-728; phosphorylation leads to a conformational change, and thus, increases its association with 14-3-3 proteins, MAP3K5, RIPK1 and TRAF2 in endothelial cells; also stimulates regulatory p85 subunit sequestring and PI3K-p85 complex activity inhibition. Expressed in vascular endothelium of muscle and aorta, in smooth muscle cells of aorta and epithelial cells of lung. Expressed throughout the brain, including olfactory bulb, hypothalamus, cerebellum and cerebral cortex. Expressed in the soma and processes of neurons in a variety of brain structures, including the developing cerebral cortex, CA1 pyramidal neurons and Purkinje cells. Poorly expressed in medulloblastoma cells compared to cerebellar precursor proliferating progenitor cells (at protein level). Highly expressed in the brain, salivary gland, and testis; moderate expression in kidney and heart. Low expression in the lung, seminal vesicle, ventral prostate, epididymis, liver, and bladder. Very low expression in the coagulation gland and skeleton muscles. Lowest expression seen in spleen.

It localises to the cytoplasm. The protein resides in the cell membrane. It is found in the membrane. Its subcellular location is the cell projection. The protein localises to the dendrite. Functions as a scaffold protein implicated in the regulation of a large spectrum of both general and specialized signaling pathways. Involved in several processes such as innate immune response, inflammation and cell growth inhibition, apoptosis, cell survival, angiogenesis, cell migration and maturation. Also plays a role in cell cycle checkpoint control; reduces G1 phase cyclin levels resulting in G0/G1 cell cycle arrest. Mediates signal transduction by receptor-mediated inflammatory signals, such as the tumor necrosis factor (TNF), interferon (IFN) or lipopolysaccharide (LPS). Modulates the balance between phosphatidylinositol 3-kinase (PI3K)-AKT-mediated cell survival and apoptosis stimulated kinase (MAP3K5)-JNK signaling pathways; sequesters both AKT1 and MAP3K5 and counterbalances the activity of each kinase by modulating their phosphorylation status in response to pro-inflammatory stimuli. Acts as a regulator of the endoplasmic reticulum (ER) unfolded protein response (UPR) pathway; specifically involved in transduction of the ER stress-response to the JNK cascade through ERN1. Mediates TNF-alpha-induced apoptosis activation by facilitating dissociation of inhibitor 14-3-3 from MAP3K5; recruits the PP2A phosphatase complex which dephosphorylates MAP3K5 on 'Ser-966', leading to the dissociation of 13-3-3 proteins and activation of the MAP3K5-JNK signaling pathway in endothelial cells. Also mediates TNF/TRAF2-induced MAP3K5-JNK activation, while it inhibits CHUK-NF-kappa-B signaling. Acts a negative regulator in the IFN-gamma-mediated JAK-STAT signaling cascade by inhibiting smooth muscle cell (VSMCs) proliferation and intimal expansion, and thus, prevents graft arteriosclerosis (GA). Acts as a GTPase-activating protein (GAP) for the ADP ribosylation factor 6 (ARF6) and Ras. Promotes hydrolysis of the ARF6-bound GTP and thus, negatively regulates phosphatidylinositol 4,5-bisphosphate (PIP2)-dependent TLR4-TIRAP-MyD88 and NF-kappa-B signaling pathways in endothelial cells in response to lipopolysaccharides (LPS). Binds specifically to phosphatidylinositol 4-phosphate (PtdIns4P) and phosphatidylinositol 3-phosphate (PtdIns3P). In response to vascular endothelial growth factor (VEGFA), acts as a negative regulator of the VEGFR2-PI3K-mediated angiogenic signaling pathway by inhibiting endothelial cell migration and tube formation. In the developing brain, promotes both the transition from the multipolar to the bipolar stage and the radial migration of cortical neurons from the ventricular zone toward the superficial layer of the neocortex in a glial-dependent locomotion process. Probable downstream effector of the Reelin signaling pathway; promotes Purkinje cell (PC) dendrites development and formation of cerebellar synapses. Also functions as a tumor suppressor protein in prostate cancer progression; prevents cell proliferation and epithelial-to-mesenchymal transition (EMT) through activation of the glycogen synthase kinase-3 beta (GSK3B)-induced beta-catenin and inhibition of PI3K-AKT and Ras-MAPK survival downstream signaling cascades, respectively. The chain is Disabled homolog 2-interacting protein (Dab2ip) from Mus musculus (Mouse).